A 275-amino-acid polypeptide reads, in one-letter code: Probable aquaporin NIP7-1 (275 aa).

A compositionally biased stretch (basic and acidic residues) spans 1–11 (MNGEARSRVVD). The tract at residues 1–26 (MNGEARSRVVDQEAGSTPSTLRDEDH) is disordered. Helical transmembrane passes span 47–67 (IVMA…GVIS) and 76–96 (VGLL…VYSI). Positions 105–107 (NPS) match the NPA 1 motif. 3 helical membrane-spanning segments follow: residues 127–147 (ITAQ…VYGV), 161–181 (VSAF…ASAL), and 192–212 (LTGF…GPIS). Residues 217–219 (NPA) carry the NPA 2 motif. Residues 231–251 (FEDLWIYMTAPVIGAIIGVLT) traverse the membrane as a helical segment. Serine 272 is subject to Phosphoserine.

Belongs to the MIP/aquaporin (TC 1.A.8) family. NIP (TC 1.A.8.12) subfamily. In terms of tissue distribution, expressed in floral buds.

The protein resides in the membrane. In terms of biological role, aquaporins facilitate the transport of water and small neutral solutes across cell membranes. This chain is Probable aquaporin NIP7-1 (NIP7-1), found in Arabidopsis thaliana (Mouse-ear cress).